The sequence spans 666 residues: Calcium/calmodulin-dependent protein kinase type II subunit beta (666 aa).

Residues 14 to 272 (YQLYEDIGKG…AHEALKHPWV (259 aa)) form the Protein kinase domain. At Tyr-17 the chain carries Phosphotyrosine. ATP is bound by residues 20–28 (IGKGAFSVV) and Lys-43. Asp-136 acts as the Proton acceptor in catalysis. Residues 283 to 292 (HRQETVECLK) are autoinhibitory domain. Thr-287 is modified (phosphothreonine; by autocatalysis). The tract at residues 291 to 301 (LKKFNARRKLK) is calmodulin-binding. 2 positions are modified to phosphothreonine; by autocatalysis: Thr-306 and Thr-307. Residues 349–534 (ADGVKPQTNS…IPGPLPTPSR (186 aa)) are disordered. Positions 354–369 (PQTNSTKNSAAATSPK) are enriched in polar residues. Phosphoserine occurs at positions 367, 394, and 397. Phosphothreonine is present on residues Thr-400 and Thr-401. Pro residues predominate over residues 432–447 (LPCPSPAPFSPLPAPS). Low complexity predominate over residues 479 to 491 (SPALLGPLSSPSP). The segment covering 514–531 (PVGPPPCPSPTIPGPLPT) has biased composition (pro residues).

It belongs to the protein kinase superfamily. CAMK Ser/Thr protein kinase family. CaMK subfamily. As to quaternary structure, CAMK2 is composed of 4 different chains: alpha (CAMK2A), beta (CAMK2B), gamma (CAMK2G), and delta (CAMK2D). The different isoforms assemble into homo- or heteromultimeric holoenzymes composed of 12 subunits with two hexameric rings stacked one on top of the other. Interacts with SYNGAP1 and CAMK2N2. Interacts with MPDZ. Interacts with FOXO3. Interacts (when in a kinase inactive state not associated with calmodulin) with ARC; leading to target ARC to inactive synapses. Interacts with CAMK2N1; this interaction requires CAMK2B activation by Ca(2+). In terms of processing, autophosphorylation of Thr-287 following activation by Ca(2+)/calmodulin. Phosphorylation of Thr-287 locks the kinase into an activated state. Widely expressed. Expressed in adult and fetal brain. Expression is slightly lower in fetal brain. Expressed in skeletal muscle.

It is found in the cytoplasm. Its subcellular location is the cytoskeleton. The protein localises to the microtubule organizing center. The protein resides in the centrosome. It localises to the sarcoplasmic reticulum membrane. It is found in the synapse. It carries out the reaction L-seryl-[protein] + ATP = O-phospho-L-seryl-[protein] + ADP + H(+). The catalysed reaction is L-threonyl-[protein] + ATP = O-phospho-L-threonyl-[protein] + ADP + H(+). Activated by Ca(2+)/calmodulin. Binding of calmodulin results in conformational change that relieves intrasteric autoinhibition and allows autophosphorylation of Thr-287 which turns the kinase in a constitutively active form and confers to the kinase a Ca(2+)-independent activity. In terms of biological role, calcium/calmodulin-dependent protein kinase that functions autonomously after Ca(2+)/calmodulin-binding and autophosphorylation, and is involved in dendritic spine and synapse formation, neuronal plasticity and regulation of sarcoplasmic reticulum Ca(2+) transport in skeletal muscle. In neurons, plays an essential structural role in the reorganization of the actin cytoskeleton during plasticity by binding and bundling actin filaments in a kinase-independent manner. This structural function is required for correct targeting of CaMK2A, which acts downstream of NMDAR to promote dendritic spine and synapse formation and maintain synaptic plasticity which enables long-term potentiation (LTP) and hippocampus-dependent learning. In developing hippocampal neurons, promotes arborization of the dendritic tree and in mature neurons, promotes dendritic remodeling. Also regulates the migration of developing neurons. Participates in the modulation of skeletal muscle function in response to exercise. In slow-twitch muscles, is involved in regulation of sarcoplasmic reticulum (SR) Ca(2+) transport and in fast-twitch muscle participates in the control of Ca(2+) release from the SR through phosphorylation of triadin, a ryanodine receptor-coupling factor, and phospholamban (PLN/PLB), an endogenous inhibitor of SERCA2A/ATP2A2. In response to interferon-gamma (IFN-gamma) stimulation, catalyzes phosphorylation of STAT1, stimulating the JAK-STAT signaling pathway. Phosphorylates reticulophagy regulator RETREG1 at 'Ser-151' under endoplasmic reticulum stress conditions which enhances RETREG1 oligomerization and its membrane scission and reticulophagy activity. The sequence is that of Calcium/calmodulin-dependent protein kinase type II subunit beta (CAMK2B) from Homo sapiens (Human).